The following is a 57-amino-acid chain: Large ribosomal subunit protein eL20 (57 aa).

Residues 1-10 are compositionally biased toward polar residues; that stretch reads MSEFTVTGTF. The segment at 1-21 is disordered; sequence MSEFTVTGTFESRDGNQPFEK.

The protein belongs to the eukaryotic ribosomal protein eL20 family. Part of the 50S ribosomal subunit. Binds 23S rRNA.

The sequence is that of Large ribosomal subunit protein eL20 from Halomicrobium mukohataei (strain ATCC 700874 / DSM 12286 / JCM 9738 / NCIMB 13541) (Haloarcula mukohataei).